A 101-amino-acid chain; its full sequence is Large ribosomal subunit protein eL31 (101 aa).

Belongs to the eukaryotic ribosomal protein eL31 family.

The polypeptide is Large ribosomal subunit protein eL31 (Ignicoccus hospitalis (strain KIN4/I / DSM 18386 / JCM 14125)).